The following is a 540-amino-acid chain: T-complex protein 1 subunit alpha (540 aa).

This sequence belongs to the TCP-1 chaperonin family. Component of the T-complex protein 1 (TCP1) complex.

The protein resides in the cytoplasm. Molecular chaperone; assists the folding of proteins upon ATP hydrolysis. The protein is T-complex protein 1 subunit alpha (TCP1) of Encephalitozoon cuniculi (strain GB-M1) (Microsporidian parasite).